The sequence spans 291 residues: Probable plasmid-partitioning protein ParB (291 aa).

This sequence belongs to the ParB family.

The protein is Probable plasmid-partitioning protein ParB of Deinococcus radiodurans (strain ATCC 13939 / DSM 20539 / JCM 16871 / CCUG 27074 / LMG 4051 / NBRC 15346 / NCIMB 9279 / VKM B-1422 / R1).